The sequence spans 116 residues: Cuticle protein AM1274 (116 aa).

Gln-1 carries the post-translational modification Pyrrolidone carboxylic acid. Positions 1 to 22 (QLANEPPIEIIRQESTDNGDGN) are disordered. The region spanning 20-85 (DGNFNFLFET…PVSDFIPTPH (66 aa)) is the Chitin-binding type R&amp;R domain. O-linked (HexNAc) threonine glycosylation occurs at Thr-83.

Arthrodial membrane.

This Cancer pagurus (Rock crab) protein is Cuticle protein AM1274.